Reading from the N-terminus, the 651-residue chain is Intraflagellar transport protein 70A (651 aa).

7 TPR repeats span residues 8–41 (DGEY…QYRS), 42–75 (RAGL…TPEV), 140–173 (PESE…MGYK), 175–207 (DLSY…GIRE), 372–405 (LTEQ…YDET), 410–443 (IPVL…CNEH), and 445–478 (IWKL…HYDN). Positions 494–521 (YIMTSQNEEAEELMRKIEKEEEQIAYEN) form a coiled coil. One copy of the TPR 8 repeat lies at 530 to 563 (CIVNLVIGTLYCAKGNYEFGISRVIKSLEPYNKK).

This sequence belongs to the TTC30/dfy-1/fleer family.

It is found in the cell projection. It localises to the cilium. Functionally, required for polyglutamylation of axonemal tubulin. Plays a role in anterograde intraflagellar transport (IFT), the process by which cilia precursors are transported from the base of the cilium to the site of their incorporation at the tip. The sequence is that of Intraflagellar transport protein 70A (ift70a) from Xenopus tropicalis (Western clawed frog).